An 856-amino-acid chain; its full sequence is MTTYTPMMQQYLQVKEDYKDAFLFFRLGDFYEMFFEDAINASQILEITLTSRDAGAKERIPMCGVPHHSAKNYIETLVQKGYKVAICEQTEDPKQAKGVVKREVVQLITPGTIMEGKTLEGKSNHFIGAAEQLDDTTFGYAYLDLSTGEAVASSIEGDGKALLMQMQAYGIRELIVTDSLQLLLAEHAANAAIVLSVEADEMTMDKAASYVEAVPPALQISCLRLLAYIDKTQMRSLSHIQAFTFNEMKHYLRIDSSSKRNLELIQSIRGGDQKGTLLWLLDDTVTAMGGRKLKQWLHQPLATRSAIESRLAIVTDLLEEYFVRTELQTALKQVYDLERLAGRVAFGNVGGRDLAQLRDSLRQVPAIQQQLMGAGKETLQQIGVALDTCTDVVELLAKAITDNPPITIKEGDVIRDGYHGRLDELRYAARNGKDWIAQLEQEERLKTGIKNLKIGYNRIFGYYIEITKSNIHLADLTRYERKQTLANAERYITQELKEKEALILNAEEESLALEYNLFVEIRDALKEFIPRVQALAASISELDVLLSFASISEKYRFTKPQFHNGRALEIIEGRHPVVEKMLNKQMYVPNDCVLEEQNNMMLITGPNMSGKSTYMRQVALIVVMAQMGCYVPAEKAKLPITDQIFTRIGAADDLAAGQSTFMVEMLESQHAIMHATKNSLMLFDEIGRGTSTYDGMSLAQSMMEYIHDKIGANTLFSTHYHELTALEKDLPRLQNVHVAATEKNGMVVFLHKVKKGAADKSYGIHVAQLAQLPEEILARARVLLENFEAGNEVVAEAQKIAEPPLQMSLFTEEEPMAPAEAEVLKKLEKVNILGTSPMQAMNILYELQQELLNMKK.

605–612 (GPNMSGKS) lines the ATP pocket.

This sequence belongs to the DNA mismatch repair MutS family.

Its function is as follows. This protein is involved in the repair of mismatches in DNA. It is possible that it carries out the mismatch recognition step. This protein has a weak ATPase activity. The protein is DNA mismatch repair protein MutS of Lysinibacillus sphaericus (strain C3-41).